The following is a 1238-amino-acid chain: Virulence sensor protein BvgS (1238 aa).

An N-terminal signal peptide occupies residues 1 to 30 (MPAPHRLYPRSLICLAQALLAWALLAWAPA). At 33–307 (SQELTLVGKA…REQQWMANHP (275 aa)) the chain is on the cytoplasmic side. A helical transmembrane segment spans residues 308–331 (VVKVAVLNLFAPFTLFRTDEQFGG). The Periplasmic segment spans residues 332–541 (ISAAVLQLLQ…PRTWYAYRNE (210 aa)). A helical membrane pass occupies residues 542 to 563 (IYLLIGLGLLSALLFLSWIVYL). Residues 564–1238 (RRQIRQRKRA…LEQRPHQGQP (675 aa)) lie on the Cytoplasmic side of the membrane. The PAS domain occupies 580-651 (QLEFMRVLID…MHEFLLTRMS (72 aa)). One can recognise a PAC domain in the interval 652-708 (AEREPRFEDRDVTLHGRTRHVYQWTVPYGDSLGELKGIIGGWIDITERAELLRELHD). Residues 726 to 948 (TMSHEIRTPM…TVSVDLRLTM (223 aa)) enclose the Histidine kinase domain. H729 carries the post-translational modification Phosphohistidine; by autocatalysis. Residues 974–1095 (RVLVVDDHKP…ALRQRLNEAA (122 aa)) enclose the Response regulatory domain. Residue D1023 is modified to 4-aspartylphosphate. The 96-residue stretch at 1133–1228 (DEALIRQLLE…AALETQLRAW (96 aa)) folds into the HPt domain. Residue H1172 is modified to Phosphohistidine.

Activation requires a sequential transfer of a phosphate group from a His in the primary transmitter domain, to an Asp in the receiver domain and to a His in the secondary transmitter domain.

Its subcellular location is the cell inner membrane. It carries out the reaction ATP + protein L-histidine = ADP + protein N-phospho-L-histidine.. In terms of biological role, member of the two-component regulatory system BvgS/BvgA. Phosphorylates BvgA via a four-step phosphorelay in response to environmental signals. This chain is Virulence sensor protein BvgS (bvgS), found in Bordetella bronchiseptica (strain ATCC BAA-588 / NCTC 13252 / RB50) (Alcaligenes bronchisepticus).